A 110-amino-acid polypeptide reads, in one-letter code: Large ribosomal subunit protein uL22 (110 aa).

This sequence belongs to the universal ribosomal protein uL22 family. As to quaternary structure, part of the 50S ribosomal subunit.

Functionally, this protein binds specifically to 23S rRNA; its binding is stimulated by other ribosomal proteins, e.g. L4, L17, and L20. It is important during the early stages of 50S assembly. It makes multiple contacts with different domains of the 23S rRNA in the assembled 50S subunit and ribosome. Its function is as follows. The globular domain of the protein is located near the polypeptide exit tunnel on the outside of the subunit, while an extended beta-hairpin is found that lines the wall of the exit tunnel in the center of the 70S ribosome. The chain is Large ribosomal subunit protein uL22 from Citrobacter koseri (strain ATCC BAA-895 / CDC 4225-83 / SGSC4696).